A 232-amino-acid chain; its full sequence is TIR domain-containing adapter molecule 2 (232 aa).

The span at 1-10 (MGIGKSKMDP) shows a compositional bias: basic and acidic residues. Residues 1-71 (MGIGKSKMDP…VEERPEEDTE (71 aa)) form a disordered region. G2 carries N-myristoyl glycine lipidation. Over residues 19–29 (KSQSVDTSQSH) the composition is skewed to polar residues. The segment covering 30–42 (HMSDSKQSEEISL) has biased composition (basic and acidic residues). Residues 55-71 (PAEEQEGVEERPEEDTE) show a composition bias toward acidic residues. Residues 70 to 226 (TEEEVFLKFV…AIWKETRNTV (157 aa)) enclose the TIR domain. The residue at position 164 (Y164) is a Phosphotyrosine.

As to quaternary structure, homodimer. Interacts with TLR4, TICAM1, IRF3 and IRF7 in response to LPS. Interacts with IL1R1, IL1RAP, IRAK2, IRAK3 and TRAF6. Interacts with protein kinase-inactive mutants of IRAK1 and IRAK4. Isoform 1 interacts with isoform 2; the interaction occurs in late endosomes and disrupts the interaction between isoform 1 and TICAM1. Interacts with MYD88; the interaction decreases after IL-18 stimulation in a time-dependent manner. Interacts with IL18R1 and IL18RAP. Interacts with TLR2. Interacts with RAB11FIP2. Post-translationally, myristoylated. Required for membrane association which is critical for its ability to initiate efficient signaling. Phosphorylated by PRKCE in response to LPS. Phosphorylation is essential for its function. It is depleted from the membrane upon phosphorylation. Tyrosine phosphorylation is inhibited by phosphatase PTPN4.

It is found in the cytoplasm. It localises to the golgi apparatus. The protein resides in the cell membrane. The protein localises to the endoplasmic reticulum. Its subcellular location is the early endosome. It is found in the late endosome. It localises to the cell projection. The protein resides in the phagocytic cup. In terms of biological role, functions as a sorting adapter in different signaling pathways to facilitate downstream signaling leading to type I interferon induction. In TLR4 signaling, physically bridges TLR4 and TICAM1 and functionally transmits signal to TICAM1 in early endosomes after endocytosis of TLR4. In TLR2 signaling, physically bridges TLR2 and MYD88 and is required for the TLR2-dependent movement of MYD88 to endosomes following ligand engagement. Involved in IL-18 signaling and is proposed to function as a sorting adapter for MYD88 in IL-18 signaling during adaptive immune response. Forms a complex with RAB11FIP2 that is recruited to the phagosomes to promote the activation of the actin-regulatory GTPases RAC1 and CDC42 and subsequent phagocytosis of Gram-negative bacteria. This is TIR domain-containing adapter molecule 2 (TICAM2) from Bos taurus (Bovine).